The primary structure comprises 83 residues: UPF0297 protein CKR_1221 (83 aa).

It belongs to the UPF0297 family.

In Clostridium kluyveri (strain NBRC 12016), this protein is UPF0297 protein CKR_1221.